Here is a 185-residue protein sequence, read N- to C-terminus: ATP synthase subunit b, chloroplastic (185 aa).

The chain crosses the membrane as a helical span at residues 31 to 49 (LINSGVVLGLPVYSGKGVL).

The protein belongs to the ATPase B chain family. F-type ATPases have 2 components, F(1) - the catalytic core - and F(0) - the membrane proton channel. F(1) has five subunits: alpha(3), beta(3), gamma(1), delta(1), epsilon(1). F(0) has four main subunits: a(1), b(1), b'(1) and c(10-14). The alpha and beta chains form an alternating ring which encloses part of the gamma chain. F(1) is attached to F(0) by a central stalk formed by the gamma and epsilon chains, while a peripheral stalk is formed by the delta, b and b' chains.

Its subcellular location is the plastid. The protein resides in the chloroplast thylakoid membrane. F(1)F(0) ATP synthase produces ATP from ADP in the presence of a proton or sodium gradient. F-type ATPases consist of two structural domains, F(1) containing the extramembraneous catalytic core and F(0) containing the membrane proton channel, linked together by a central stalk and a peripheral stalk. During catalysis, ATP synthesis in the catalytic domain of F(1) is coupled via a rotary mechanism of the central stalk subunits to proton translocation. Functionally, component of the F(0) channel, it forms part of the peripheral stalk, linking F(1) to F(0). The sequence is that of ATP synthase subunit b, chloroplastic from Huperzia lucidula (Shining clubmoss).